Here is a 55-residue protein sequence, read N- to C-terminus: Large ribosomal subunit protein bL33 (55 aa).

The protein belongs to the bacterial ribosomal protein bL33 family.

This is Large ribosomal subunit protein bL33 from Methylacidiphilum infernorum (isolate V4) (Methylokorus infernorum (strain V4)).